A 351-amino-acid polypeptide reads, in one-letter code: Porphobilinogen deaminase (351 aa).

Cys242 bears the S-(dipyrrolylmethanemethyl)cysteine mark.

The protein belongs to the HMBS family. In terms of assembly, monomer. Dipyrromethane is required as a cofactor.

It catalyses the reaction 4 porphobilinogen + H2O = hydroxymethylbilane + 4 NH4(+). Its pathway is porphyrin-containing compound metabolism; protoporphyrin-IX biosynthesis; coproporphyrinogen-III from 5-aminolevulinate: step 2/4. In terms of biological role, tetrapolymerization of the monopyrrole PBG into the hydroxymethylbilane pre-uroporphyrinogen in several discrete steps. The sequence is that of Porphobilinogen deaminase from Rickettsia rickettsii (strain Sheila Smith).